The sequence spans 1035 residues: Probable LRR receptor-like serine/threonine-protein kinase At1g53440 (1035 aa).

Positions 1 to 26 (MGFFFSTRKGLLLIIFICLDIFGSNA) are cleaved as a signal peptide. Over 27–607 (QLLPEDEVQT…VDTGKPLSNG (581 aa)) the chain is Extracellular. N-linked (GlcNAc...) asparagine glycosylation is found at asparagine 46, asparagine 75, asparagine 83, and asparagine 110. 7 LRR repeats span residues 87–110 (VCRVTNIQLRGFNLRGIIPPEFGN), 111–135 (LTRLTEIDLVLNFLSGTIPTTLSQI), 137–158 (LEILAVTGNRLSGPFPPQLGQI), 160–182 (TLTDVIMESNLFTGQLPPNLGNL), 183–206 (RSLKRLLISSNNITGRIPESLSNL), 208–232 (NLTNFRIDGNSLSGKIPDFIGNWTR), and 234–254 (VRLDLQGTSMEGPIPASISNL). N-linked (GlcNAc...) asparagine glycans are attached at residues asparagine 194, asparagine 208, and asparagine 229. Asparagine 256 and asparagine 277 each carry an N-linked (GlcNAc...) asparagine glycan. LRR repeat units lie at residues 278–302 (MTNMERLVLRNCLIREPIPEYIGTS), 303–326 (MTMLKLLDLSSNMLNGTIPDTFRS), 328–349 (NAFNFMYLNNNSLTGPVPQFIL), and 350–372 (DSKQNIDLSYNNFTQPPTLSCNQ). N-linked (GlcNAc...) asparagine glycans are attached at residues asparagine 317, asparagine 337, asparagine 361, asparagine 386, asparagine 469, and asparagine 559. A helical membrane pass occupies residues 608 to 628 (VVAGIVIAACVAFGLLVLVIL). Residues 629-1035 (RLTGYLGGKE…LDDLTDVEIE (407 aa)) are Cytoplasmic-facing. Residue threonine 656 is modified to Phosphothreonine. The Protein kinase domain occupies 667-948 (FDPENKIGEG…QGKIKVQPPL (282 aa)). ATP-binding positions include 673–681 (IGEGGFGPV) and lysine 695. The residue at position 740 (tyrosine 740) is a Phosphotyrosine. Residue aspartate 793 is the Proton acceptor of the active site. Serine 826 is modified (phosphoserine). Threonine 827 and threonine 832 each carry phosphothreonine. Tyrosine 840 carries the phosphotyrosine modification. The segment at 969-1035 (LSQDSESQVS…LDDLTDVEIE (67 aa)) is disordered. The segment covering 972–981 (DSESQVSTYT) has biased composition (polar residues). Over residues 1009 to 1023 (SLLQQEEGNSSSSSR) the composition is skewed to low complexity.

It belongs to the protein kinase superfamily. Ser/Thr protein kinase family.

The protein localises to the cell membrane. The catalysed reaction is L-seryl-[protein] + ATP = O-phospho-L-seryl-[protein] + ADP + H(+). It catalyses the reaction L-threonyl-[protein] + ATP = O-phospho-L-threonyl-[protein] + ADP + H(+). The sequence is that of Probable LRR receptor-like serine/threonine-protein kinase At1g53440 from Arabidopsis thaliana (Mouse-ear cress).